Consider the following 160-residue polypeptide: General odorant-binding protein 2 (160 aa).

The first 20 residues, 1–20, serve as a signal peptide directing secretion; the sequence is MFSFLILVFVASVADSVIGT. Cystine bridges form between cysteine 38/cysteine 73, cysteine 69/cysteine 127, and cysteine 116/cysteine 136.

The protein belongs to the PBP/GOBP family. As to quaternary structure, homodimer. In terms of tissue distribution, detected in antenna (at protein level). Expressed at high levels in antenna.

Functionally, present in the aqueous fluid surrounding olfactory sensory dendrites and are thought to aid in the capture and transport of hydrophobic odorants into and through this fluid. In Bombyx mori (Silk moth), this protein is General odorant-binding protein 2.